The following is a 292-amino-acid chain: NAD kinase (292 aa).

D73 serves as the catalytic Proton acceptor. NAD(+)-binding positions include 73–74 (DG), 147–148 (NE), H158, R175, D177, 188–193 (TGYSLS), and Q247.

It belongs to the NAD kinase family. A divalent metal cation serves as cofactor.

Its subcellular location is the cytoplasm. The enzyme catalyses NAD(+) + ATP = ADP + NADP(+) + H(+). Functionally, involved in the regulation of the intracellular balance of NAD and NADP, and is a key enzyme in the biosynthesis of NADP. Catalyzes specifically the phosphorylation on 2'-hydroxyl of the adenosine moiety of NAD to yield NADP. In Buchnera aphidicola subsp. Acyrthosiphon pisum (strain 5A), this protein is NAD kinase.